Reading from the N-terminus, the 347-residue chain is Heat-inducible transcription repressor HrcA (347 aa).

Belongs to the HrcA family.

In terms of biological role, negative regulator of class I heat shock genes (grpE-dnaK-dnaJ and groELS operons). Prevents heat-shock induction of these operons. The protein is Heat-inducible transcription repressor HrcA of Lactobacillus delbrueckii subsp. bulgaricus (strain ATCC BAA-365 / Lb-18).